Here is a 276-residue protein sequence, read N- to C-terminus: Aquaporin-1 (276 aa).

Topologically, residues 1–10 (MLDAEQKKNY) are cytoplasmic. The helical transmembrane segment at 11–31 (VAGAFGEFVGTAYFLFMGVGG) threads the bilayer. The Extracellular segment spans residues 32–46 (AVNFLNNAAGSPLPG). The helical transmembrane segment at 47–67 (FAIPFCFGFSLFVNVFIWAPI) threads the bilayer. The Cytoplasmic portion of the chain corresponds to 68–93 (SGGVFNPSITIALMATNPKDFPWYRG). The NPA 1 signature appears at 73–75 (NPS). A helical transmembrane segment spans residues 94–114 (ILYIVSQFLGALFGSWLIDLI). The Extracellular segment spans residues 115–133 (QPEAPNAATLLADGVSVAQ). A helical membrane pass occupies residues 134-154 (GLFMEMFATSVLTMAVLILAG). The Cytoplasmic portion of the chain corresponds to 155–159 (ERYGK). The helical transmembrane segment at 160–180 (YLAPFGIGMSLFISALCAGPY) threads the bilayer. Residues 181–204 (TGASLNPARTLGPAIVANQYGRAH) are Extracellular-facing. Positions 186-188 (NPA) match the NPA 2 motif. The helical transmembrane segment at 205-225 (WIYYVGPTLGSLLAAGYWHIL) threads the bilayer. Topologically, residues 226-276 (RILNIDVVDLKNVLNKCKKCGKEDPRISLKHCEECLKDDPKPEKYDIESQN) are cytoplasmic.

Belongs to the MIP/aquaporin (TC 1.A.8) family.

The protein localises to the cell membrane. The enzyme catalyses H2O(in) = H2O(out). Its activity is regulated as follows. Polyethylene glycol (PEG) stimulates whereas glycerol inhibits the aquaporin activity. In terms of biological role, water channel required to facilitate the transport of water across membranes. Stimulates plant drought tolerance by facilitating the transport of water from the arbuscular mycorrhiza fungus to host plants. In Rhizophagus irregularis (Arbuscular mycorrhizal fungus), this protein is Aquaporin-1.